A 120-amino-acid polypeptide reads, in one-letter code: UPF0102 protein CbuK_0265 (120 aa).

Belongs to the UPF0102 family.

This Coxiella burnetii (strain CbuK_Q154) (Coxiella burnetii (strain Q154)) protein is UPF0102 protein CbuK_0265.